We begin with the raw amino-acid sequence, 288 residues long: Diaminopimelate epimerase (288 aa).

Substrate contacts are provided by Asn-13, Gln-46, and Asn-66. Cys-75 (proton donor) is an active-site residue. Substrate is bound by residues 76-77 (GN), Asn-166, Asn-199, and 217-218 (ER). Cys-226 serves as the catalytic Proton acceptor. 227-228 (GT) lines the substrate pocket.

This sequence belongs to the diaminopimelate epimerase family. Homodimer.

The protein localises to the cytoplasm. The catalysed reaction is (2S,6S)-2,6-diaminopimelate = meso-2,6-diaminopimelate. Its pathway is amino-acid biosynthesis; L-lysine biosynthesis via DAP pathway; DL-2,6-diaminopimelate from LL-2,6-diaminopimelate: step 1/1. Its function is as follows. Catalyzes the stereoinversion of LL-2,6-diaminopimelate (L,L-DAP) to meso-diaminopimelate (meso-DAP), a precursor of L-lysine and an essential component of the bacterial peptidoglycan. This is Diaminopimelate epimerase from Cupriavidus pinatubonensis (strain JMP 134 / LMG 1197) (Cupriavidus necator (strain JMP 134)).